The chain runs to 178 residues: Small ribosomal subunit protein uS5 (178 aa).

In terms of domain architecture, S5 DRBM spans 15–78 (FEEKIIEIRR…SAAKRNIVEV (64 aa)).

It belongs to the universal ribosomal protein uS5 family. Part of the 30S ribosomal subunit. Contacts proteins S4 and S8.

Functionally, with S4 and S12 plays an important role in translational accuracy. Its function is as follows. Located at the back of the 30S subunit body where it stabilizes the conformation of the head with respect to the body. The chain is Small ribosomal subunit protein uS5 from Thermotoga maritima (strain ATCC 43589 / DSM 3109 / JCM 10099 / NBRC 100826 / MSB8).